We begin with the raw amino-acid sequence, 183 residues long: Capsid protein (183 aa).

Residues 136-183 (NAPILSTLPETTVVRRRGRSPRRRTPSPRRRRSQSPRRRRSQSRESQC) are disordered. A compositionally biased stretch (basic residues) spans 149 to 176 (VRRRGRSPRRRTPSPRRRRSQSPRRRRS). Residues S155, S162, and S170 each carry the phosphoserine; by host modification. The 1; half-length repeat unit spans residues 155–161 (SPRRRTP). The tract at residues 155 to 177 (SPRRRTPSPRRRRSQSPRRRRSQ) is 3 X 8 AA repeats of S-P-R-R-R-[PR]-S-Q. Positions 158 to 175 (RRTPSPRRRRSQSPRRRR) match the Bipartite nuclear localization signal motif. Repeat copies occupy residues 162–169 (SPRRRRSQ) and 170–177 (SPRRRRSQ). The interval 177-183 (QSRESQC) is RNA binding.

The protein belongs to the orthohepadnavirus core antigen family. In terms of assembly, homodimerizes, then multimerizes. Interacts with cytosol exposed regions of viral L glycoprotein present in the reticulum-to-Golgi compartment. Interacts with human FLNB. Phosphorylated form interacts with host importin alpha; this interaction depends on the exposure of the NLS, which itself depends upon genome maturation and/or phosphorylation of the capsid protein. Interacts with host NUP153. Post-translationally, phosphorylated by host SRPK1, SRPK2, and maybe protein kinase C or GAPDH. Phosphorylation is critical for pregenomic RNA packaging. Protein kinase C phosphorylation is stimulated by HBx protein and may play a role in transport of the viral genome to the nucleus at the late step during the viral replication cycle.

It localises to the virion. It is found in the host cytoplasm. Self assembles to form an icosahedral capsid. Most capsids appear to be large particles with an icosahedral symmetry of T=4 and consist of 240 copies of capsid protein, though a fraction forms smaller T=3 particles consisting of 180 capsid proteins. Entering capsids are transported along microtubules to the nucleus. Phosphorylation of the capsid is thought to induce exposure of nuclear localization signal in the C-terminal portion of the capsid protein that allows binding to the nuclear pore complex via the importin (karyopherin-) alpha and beta. Capsids are imported in intact form through the nuclear pore into the nuclear basket, where it probably binds NUP153. Only capsids that contain the mature viral genome can release the viral DNA and capsid protein into the nucleoplasm. Immature capsids get stuck in the basket. Capsids encapsulate the pre-genomic RNA and the P protein. Pre-genomic RNA is reverse-transcribed into DNA while the capsid is still in the cytoplasm. The capsid can then either be directed to the nucleus, providing more genomes for transcription, or bud through the endoplasmic reticulum to provide new virions. This Hepatitis B virus genotype B2 (isolate Indonesia/pIDW420/1988) (HBV-B) protein is Capsid protein.